A 400-amino-acid polypeptide reads, in one-letter code: Acetate kinase (400 aa).

Residue Asn10 coordinates Mg(2+). Lys17 contacts ATP. Substrate is bound at residue Arg91. Asp150 functions as the Proton donor/acceptor in the catalytic mechanism. ATP contacts are provided by residues 210–214 (HLGNG), 285–287 (DCR), and 333–337 (GIGEN). Glu387 is a binding site for Mg(2+).

The protein belongs to the acetokinase family. Homodimer. Mg(2+) serves as cofactor. Mn(2+) is required as a cofactor.

It localises to the cytoplasm. The enzyme catalyses acetate + ATP = acetyl phosphate + ADP. Its pathway is metabolic intermediate biosynthesis; acetyl-CoA biosynthesis; acetyl-CoA from acetate: step 1/2. In terms of biological role, catalyzes the formation of acetyl phosphate from acetate and ATP. Can also catalyze the reverse reaction. The protein is Acetate kinase of Pectobacterium atrosepticum (strain SCRI 1043 / ATCC BAA-672) (Erwinia carotovora subsp. atroseptica).